Reading from the N-terminus, the 37-residue chain is Chitinase-like protein (37 aa).

Residues 1–20 (VLLSVGGDADTESPEKKNLG) are disordered. The GH18 domain occupies 1-37 (VLLSVGGDADTESPEKKNLGGVSIVDLSMDDFRGLLT).

This sequence belongs to the glycosyl hydrolase 18 family. IDGF subfamily. Glycosylated.

It localises to the secreted. Cooperates with insulin-like peptides to stimulate the proliferation, polarization and motility of imaginal disk cells. May act by stabilizing the binding of insulin-like peptides to its receptor through a simultaneous interaction with both molecules to form a multiprotein signaling complex. This chain is Chitinase-like protein, found in Heliothis virescens (Tobacco budworm moth).